The sequence spans 104 residues: Integration host factor subunit alpha (104 aa).

Belongs to the bacterial histone-like protein family. In terms of assembly, heterodimer of an alpha and a beta chain.

In terms of biological role, this protein is one of the two subunits of integration host factor, a specific DNA-binding protein that functions in genetic recombination as well as in transcriptional and translational control. The sequence is that of Integration host factor subunit alpha from Bartonella quintana (strain Toulouse) (Rochalimaea quintana).